We begin with the raw amino-acid sequence, 803 residues long: Urocanate reductase (803 aa).

FMN phosphoryl serine is present on S258. Positions 311, 330, 338, 339, 343, 344, and 573 each coordinate FAD. Residue R632 is the Proton donor of the active site. 4 residues coordinate FAD: H739, E768, A783, and L784.

It belongs to the FAD-dependent oxidoreductase 2 family. FRD/SDH subfamily. Requires FAD as cofactor. It depends on FMN as a cofactor.

It catalyses the reaction dihydrourocanate + A = urocanate + AH2. Functionally, catalyzes the two-electron reduction of urocanate to dihydrourocanate (also named imidazole propionate or deamino-histidine). Dihydrourocanate is present at higher concentrations in subjects with type 2 diabetes, and directly impairs glucose tolerance and insulin signaling at the level of insulin receptor substrate (IRS) through activation of p38 gamma (MAPK12)-p62-mTORC1. Therefore, the UrdA enzyme from the gut bacteria S.mutans strain UA159 may contribute to the pathogenesis of type 2 diabetes by producing the microbial metabolite dihydrourocanate. This chain is Urocanate reductase, found in Streptococcus mutans serotype c (strain ATCC 700610 / UA159).